A 325-amino-acid chain; its full sequence is Helicase VP6-A (325 aa).

Disordered regions lie at residues 1–126 (MLLA…TNGR) and 175–231 (GVAE…PARI). 4 stretches are compositionally biased toward basic and acidic residues: residues 8–18 (VIKRSSEELKQ), 32–54 (EGGK…KDGE), 61–79 (GQKE…DRRI), and 92–105 (PGER…RGDG). Position 106 (lysine 106) interacts with ATP. Over residues 106 to 122 (KVGGGGGDADAGVGATG) the composition is skewed to gly residues. Basic and acidic residues predominate over residues 175 to 229 (GVAEQTERLRDLRRKEKNGTHAKAVERGGRKQRKESHGDAQREGVEEEKTSEEPA).

The protein belongs to the orbivirus VP6 family. Homohexamer.

It is found in the virion. It catalyses the reaction ATP + H2O = ADP + phosphate + H(+). Its function is as follows. ATP dependent RNA helicase essential for RNA packaging and viral transcription. Possesses ss- and dsRNA-binding capacity. In Bluetongue virus 11 (isolate USA) (BTV 11), this protein is Helicase VP6-A (Segment-9).